The chain runs to 427 residues: Glutamate-1-semialdehyde 2,1-aminomutase (427 aa).

Lys263 bears the N6-(pyridoxal phosphate)lysine mark.

It belongs to the class-III pyridoxal-phosphate-dependent aminotransferase family. HemL subfamily. Homodimer. Pyridoxal 5'-phosphate serves as cofactor.

The protein localises to the cytoplasm. It carries out the reaction (S)-4-amino-5-oxopentanoate = 5-aminolevulinate. It participates in porphyrin-containing compound metabolism; protoporphyrin-IX biosynthesis; 5-aminolevulinate from L-glutamyl-tRNA(Glu): step 2/2. This Caldicellulosiruptor saccharolyticus (strain ATCC 43494 / DSM 8903 / Tp8T 6331) protein is Glutamate-1-semialdehyde 2,1-aminomutase.